We begin with the raw amino-acid sequence, 477 residues long: Proline--tRNA ligase (477 aa).

Belongs to the class-II aminoacyl-tRNA synthetase family. ProS type 3 subfamily. In terms of assembly, homodimer.

The protein resides in the cytoplasm. The enzyme catalyses tRNA(Pro) + L-proline + ATP = L-prolyl-tRNA(Pro) + AMP + diphosphate. Functionally, catalyzes the attachment of proline to tRNA(Pro) in a two-step reaction: proline is first activated by ATP to form Pro-AMP and then transferred to the acceptor end of tRNA(Pro). The sequence is that of Proline--tRNA ligase from Methanocorpusculum labreanum (strain ATCC 43576 / DSM 4855 / Z).